The following is a 213-amino-acid chain: Phosphoribosyl-dephospho-CoA transferase (213 aa).

Residues aspartate 135 and aspartate 137 contribute to the active site.

This sequence belongs to the MdcG family.

The enzyme catalyses apo-[malonate decarboxylase ACP] + 2'-(5''-triphospho-alpha-D-ribosyl)-3'-dephospho-CoA = holo-[malonate decarboxylase ACP] + diphosphate. In terms of biological role, transfers 2'-(5-triphosphoribosyl)-3'-dephosphocoenzyme-A to the apo-[acyl-carrier-protein] of the malonate decarboxylase to yield holo-[acyl-carrier-protein]. This is Phosphoribosyl-dephospho-CoA transferase from Xanthomonas euvesicatoria pv. vesicatoria (strain 85-10) (Xanthomonas campestris pv. vesicatoria).